Reading from the N-terminus, the 335-residue chain is Phosphoserine phosphatase RsbU (335 aa).

The PPM-type phosphatase domain maps to 123 to 333 (DIGAISVPAK…DDFTLIVLRR (211 aa)).

The catalysed reaction is O-phospho-L-serine + H2O = L-serine + phosphate. The enzyme catalyses O-phospho-D-serine + H2O = D-serine + phosphate. With respect to regulation, stimulated by a long-lived interaction with RsbT. In terms of biological role, positive regulator of sigma-B activity. Dephosphorylates RsbV in response to environmental stress conveyed from the RsbXST module. The sequence is that of Phosphoserine phosphatase RsbU (rsbU) from Bacillus subtilis (strain 168).